Reading from the N-terminus, the 620-residue chain is MDSHTLIQALIYLGSAALIVPIAVRLGLGSVLGYLIAGCIIGPWGLRLVTDAESILHFAEIGVVLMLFIIGLELDPQRLWKLRAAVFGGGALQMVICGGLLGLFCMLLGLRWQVAELIGMTLALSSTAIAMQAMNERNLMVTQMGRSAFAVLLFQDIAAIPLVAMIPLLAASSASTTMGAFVLSALKVAGALALVVLLGRYVTRPALRFVARSGLREVFSAVALFLVFGFGLLLEEVGLSMAMGAFLAGVLLASSEYRHALESDIEPFKGLLLGLFFIGVGMSIDFGTLLENPLRIVILLLGFLIIKIAMLWLIARPLQVPNKQRRWFAVLLGQGSEFAFVVFGAAQMANVLEPEWAKSLTLAVALSMAATPILLVILNRLEQSSTEEAREADEIDEEQPRVIIAGFGRFGQITGRLLLSSGVKMVVLDHDPDHIETLRKFGMKVFYGDATRMDLLESAGAAKAEVLINAIDDPQTNLQLTEMVKEHFPHLQIIARARDVDHYIRLRQAGVEKPERETFEGALKTGRLALESLGLGPYEARERADVFRRFNIQMVEEMAMVENDTKARAAVYKRTSAMLSEIITEDREHLSLIQRHGWQGTEEGKHTGNMADEPETKPSS.

At 1 to 3 (MDS) the chain is on the periplasmic side. Residues 4–24 (HTLIQALIYLGSAALIVPIAV) traverse the membrane as a helical segment. Residue Arg25 is a topological domain, cytoplasmic. Residues 26 to 46 (LGLGSVLGYLIAGCIIGPWGL) traverse the membrane as a helical segment. Topologically, residues 47 to 53 (RLVTDAE) are periplasmic. A helical membrane pass occupies residues 54–74 (SILHFAEIGVVLMLFIIGLEL). Residues 75-89 (DPQRLWKLRAAVFGG) are Cytoplasmic-facing. A helical membrane pass occupies residues 90–110 (GALQMVICGGLLGLFCMLLGL). The Periplasmic segment spans residues 111 to 113 (RWQ). A helical transmembrane segment spans residues 114–134 (VAELIGMTLALSSTAIAMQAM). The Cytoplasmic portion of the chain corresponds to 135–148 (NERNLMVTQMGRSA). The chain crosses the membrane as a helical span at residues 149 to 169 (FAVLLFQDIAAIPLVAMIPLL). Residues 170–177 (AASSASTT) are Periplasmic-facing. A helical membrane pass occupies residues 178 to 198 (MGAFVLSALKVAGALALVVLL). The Cytoplasmic portion of the chain corresponds to 199–213 (GRYVTRPALRFVARS). The chain crosses the membrane as a helical span at residues 214–233 (GLREVFSAVALFLVFGFGLL). Over 234–236 (LEE) the chain is Periplasmic. The helical transmembrane segment at 237–254 (VGLSMAMGAFLAGVLLAS) threads the bilayer. The Cytoplasmic segment spans residues 255-269 (SEYRHALESDIEPFK). The helical transmembrane segment at 270-290 (GLLLGLFFIGVGMSIDFGTLL) threads the bilayer. Residues 291 to 293 (ENP) are Periplasmic-facing. Residues 294–314 (LRIVILLLGFLIIKIAMLWLI) form a helical membrane-spanning segment. At 315–326 (ARPLQVPNKQRR) the chain is on the cytoplasmic side. A helical transmembrane segment spans residues 327–347 (WFAVLLGQGSEFAFVVFGAAQ). Topologically, residues 348–358 (MANVLEPEWAK) are periplasmic. The chain crosses the membrane as a helical span at residues 359–379 (SLTLAVALSMAATPILLVILN). Over 380 to 620 (RLEQSSTEEA…ADEPETKPSS (241 aa)) the chain is Cytoplasmic. One can recognise an RCK N-terminal domain in the interval 399 to 518 (QPRVIIAGFG…AGVEKPERET (120 aa)). Residues 597–620 (GWQGTEEGKHTGNMADEPETKPSS) are disordered.

It belongs to the monovalent cation:proton antiporter 2 (CPA2) transporter (TC 2.A.37) family. KefC subfamily. As to quaternary structure, homodimer. Interacts with the regulatory subunit KefF.

It is found in the cell inner membrane. In terms of biological role, pore-forming subunit of a potassium efflux system that confers protection against electrophiles. Catalyzes K(+)/H(+) antiport. The chain is Glutathione-regulated potassium-efflux system protein KefC from Escherichia coli O6:H1 (strain CFT073 / ATCC 700928 / UPEC).